The following is a 196-amino-acid chain: Protease (196 aa).

Catalysis depends on residues histidine 54, aspartate 70, and cysteine 121.

It belongs to the peptidase C5 family. Interacts with protease cofactor pVI-C; this interaction is necessary for protease activation.

It localises to the virion. The protein localises to the host nucleus. It catalyses the reaction Cleaves proteins of the adenovirus and its host cell at two consensus sites: -Yaa-Xaa-Gly-Gly-|-Xaa- and -Yaa-Xaa-Gly-Xaa-|-Gly- (in which Yaa is Met, Ile or Leu, and Xaa is any amino acid).. Requires DNA and protease cofactor for maximal activation. Inside nascent virions, becomes partially activated by binding to the viral DNA, allowing it to cleave the cofactor that binds to the protease and fully activates it. Actin, like the viral protease cofactor, seems to act as a cofactor in the cleavage of cytokeratin 18 and of actin itself. In terms of biological role, cleaves viral precursor proteins (pTP, pIIIa, pVI, pVII, pVIII, and pX) inside newly assembled particles giving rise to mature virions. Protease complexed to its cofactor slides along the viral DNA to specifically locate and cleave the viral precursors. Mature virions have a weakened organization compared to the unmature virions, thereby facilitating subsequent uncoating. Without maturation, the particle lacks infectivity and is unable to uncoat. Late in adenovirus infection, in the cytoplasm, may participate in the cytoskeleton destruction. Cleaves host cell cytoskeletal keratins K7 and K18. The chain is Protease from Bos taurus (Bovine).